Reading from the N-terminus, the 320-residue chain is Fructose-1,6-bisphosphatase class 1 (320 aa).

Positions 84, 103, 105, and 106 each coordinate Mg(2+). Residues 106-109, N196, and K262 each bind substrate; that span reads DGSS. Residue E268 participates in Mg(2+) binding.

The protein belongs to the FBPase class 1 family. Homotetramer. Mg(2+) serves as cofactor.

Its subcellular location is the cytoplasm. The catalysed reaction is beta-D-fructose 1,6-bisphosphate + H2O = beta-D-fructose 6-phosphate + phosphate. The protein operates within carbohydrate biosynthesis; gluconeogenesis. The sequence is that of Fructose-1,6-bisphosphatase class 1 from Shewanella amazonensis (strain ATCC BAA-1098 / SB2B).